The following is a 541-amino-acid chain: Catalase (541 aa).

The interval 1–20 is disordered; the sequence is MPQTKGKPHEEQLEQYKNSQ. Active-site residues include H74 and N147. Y357 contacts heme.

Belongs to the catalase family. Heme is required as a cofactor.

The protein resides in the peroxisome matrix. The catalysed reaction is 2 H2O2 = O2 + 2 H2O. Its function is as follows. Catalyzes the degradation of hydrogen peroxide (H(2)O(2)) generated by peroxisomal oxidases to water and oxygen, thereby protecting cells from the toxic effects of hydrogen peroxide. The sequence is that of Catalase (CAT) from Ascaris suum (Pig roundworm).